The following is a 422-amino-acid chain: Elongation factor 1-alpha (422 aa).

The tr-type G domain maps to 5-221 (KPHQNLAVIG…NDLPEPQPPT (217 aa)). The tract at residues 14 to 21 (GHVDHGKS) is G1. 14–21 (GHVDHGKS) serves as a coordination point for GTP. A Mg(2+)-binding site is contributed by S21. The tract at residues 70–74 (GVTID) is G2. The tract at residues 91-94 (DCPG) is G3. GTP contacts are provided by residues 91 to 95 (DCPGH) and 146 to 149 (NKMD). Positions 146–149 (NKMD) are G4. A G5 region spans residues 185 to 187 (SAF).

The protein belongs to the TRAFAC class translation factor GTPase superfamily. Classic translation factor GTPase family. EF-Tu/EF-1A subfamily.

It is found in the cytoplasm. It catalyses the reaction GTP + H2O = GDP + phosphate + H(+). Functionally, GTP hydrolase that promotes the GTP-dependent binding of aminoacyl-tRNA to the A-site of ribosomes during protein biosynthesis. This Natronomonas pharaonis (strain ATCC 35678 / DSM 2160 / CIP 103997 / JCM 8858 / NBRC 14720 / NCIMB 2260 / Gabara) (Halobacterium pharaonis) protein is Elongation factor 1-alpha.